The chain runs to 184 residues: Threonylcarbamoyl-AMP synthase (184 aa).

The region spanning 1–184 (MNNLLAVIEL…IFTQHIFRQG (184 aa)) is the YrdC-like domain.

Belongs to the SUA5 family. TsaC subfamily.

It is found in the cytoplasm. It carries out the reaction L-threonine + hydrogencarbonate + ATP = L-threonylcarbamoyladenylate + diphosphate + H2O. In terms of biological role, required for the formation of a threonylcarbamoyl group on adenosine at position 37 (t(6)A37) in tRNAs that read codons beginning with adenine. Catalyzes the conversion of L-threonine, HCO(3)(-)/CO(2) and ATP to give threonylcarbamoyl-AMP (TC-AMP) as the acyladenylate intermediate, with the release of diphosphate. This Haemophilus ducreyi (strain 35000HP / ATCC 700724) protein is Threonylcarbamoyl-AMP synthase.